Here is a 626-residue protein sequence, read N- to C-terminus: Two-component response regulator ORR24 (626 aa).

A disordered region spans residues 1–22; it reads MTVEERQGRVGGHGVSGGGGGR. Gly residues predominate over residues 9–22; that stretch reads RVGGHGVSGGGGGR. The 116-residue stretch at 30-145 folds into the Response regulatory domain; sequence RVLAVDDDPT…QLRTIWQHVI (116 aa). At Asp-81 the chain carries 4-aspartylphosphate. Residues 151–162 are compositionally biased toward basic and acidic residues; sequence DAKNRGNDDDAG. Disordered regions lie at residues 151-215 and 400-440; these read DAKN…KKPR and LQPL…RTTN. Residues 191–202 are compositionally biased toward acidic residues; the sequence is NGDDGDDSDENS. A DNA-binding region (myb-like GARP) is located at residues 210–269; that stretch reads TQKKPRVVWSVELHRKFVAAVNQLGIEKAVPKKILDLMNVENITRENVASHLQKYRLYLK. Residues 400 to 421 are compositionally biased toward polar residues; that stretch reads LQPLESSSQQHLSRVHSSSADP.

The protein belongs to the ARR family. Type-B subfamily. Post-translationally, two-component system major event consists of a His-to-Asp phosphorelay between a sensor histidine kinase (HK) and a response regulator (RR). In plants, the His-to-Asp phosphorelay involves an additional intermediate named Histidine-containing phosphotransfer protein (HPt). This multistep phosphorelay consists of a His-Asp-His-Asp sequential transfer of a phosphate group between first a His and an Asp of the HK protein, followed by the transfer to a conserved His of the HPt protein and finally the transfer to an Asp in the receiver domain of the RR protein.

Its subcellular location is the nucleus. Transcriptional activator that binds specific DNA sequence. Functions as a response regulator involved in His-to-Asp phosphorelay signal transduction system. Phosphorylation of the Asp residue in the receiver domain activates the ability of the protein to promote the transcription of target genes. May directly activate some type-A response regulators in response to cytokinins. This Oryza sativa subsp. indica (Rice) protein is Two-component response regulator ORR24.